The primary structure comprises 506 residues: Lysine--tRNA ligase (506 aa).

Mg(2+) is bound by residues E415 and E422.

It belongs to the class-II aminoacyl-tRNA synthetase family. Homodimer. Mg(2+) serves as cofactor.

Its subcellular location is the cytoplasm. It carries out the reaction tRNA(Lys) + L-lysine + ATP = L-lysyl-tRNA(Lys) + AMP + diphosphate. The chain is Lysine--tRNA ligase (lysS) from Buchnera aphidicola subsp. Acyrthosiphon pisum (strain APS) (Acyrthosiphon pisum symbiotic bacterium).